The primary structure comprises 234 residues: Triosephosphate isomerase (234 aa).

8 to 10 is a binding site for substrate; the sequence is NFK. His-90 (electrophile) is an active-site residue. Glu-159 serves as the catalytic Proton acceptor. Substrate is bound by residues Gly-165, Ser-197, and 218–219; that span reads GS.

Homodimer.

It localises to the cytoplasm. It carries out the reaction D-glyceraldehyde 3-phosphate = dihydroxyacetone phosphate. The protein operates within carbohydrate biosynthesis; gluconeogenesis. It functions in the pathway carbohydrate degradation; glycolysis; D-glyceraldehyde 3-phosphate from glycerone phosphate: step 1/1. Functionally, involved in the gluconeogenesis. Catalyzes stereospecifically the conversion of dihydroxyacetone phosphate (DHAP) to D-glyceraldehyde-3-phosphate (G3P). The protein is Triosephosphate isomerase of Helicobacter pylori (strain ATCC 700392 / 26695) (Campylobacter pylori).